The sequence spans 1337 residues: Aldehyde oxidase 4 (1337 aa).

Residues 4–91 form the 2Fe-2S ferredoxin-type domain; sequence DDLVFAVNGE…GCSITTSDGL (88 aa). Cysteine 43, cysteine 48, cysteine 51, cysteine 73, cysteine 113, cysteine 116, cysteine 155, and cysteine 157 together coordinate [2Fe-2S] cluster. Positions 225-409 constitute an FAD-binding PCMH-type domain; it reads LDQTRYHWST…LKVHIPRWIA (185 aa). Residues 259–266, 342–346, aspartate 358, and leucine 399 contribute to the FAD site; these read LVVGNTGT and SIGGN. Mo-molybdopterin-binding residues include glutamine 771, phenylalanine 802, and arginine 915. Glutamate 1265 functions as the Proton acceptor in the catalytic mechanism.

The protein belongs to the xanthine dehydrogenase family. In terms of assembly, aldehyde oxidases (AO) are homodimers and heterodimers of AO subunits. Requires [2Fe-2S] cluster as cofactor. FAD is required as a cofactor. It depends on Mo-molybdopterin as a cofactor. Transcripts expressed at high levels in developing siliques and at low levels in dry seeds.

The protein resides in the cytoplasm. It carries out the reaction indole-3-acetaldehyde + O2 + H2O = (indol-3-yl)acetate + H2O2 + H(+). It catalyses the reaction an aldehyde + O2 + H2O = a carboxylate + H2O2 + H(+). The catalysed reaction is benzaldehyde + O2 + H2O = benzoate + H2O2 + H(+). The enzyme catalyses hexanal + O2 + H2O = hexanoate + H2O2 + H(+). It carries out the reaction 1-naphthaldehyde + O2 + H2O = 1-naphthoate + H2O2 + H(+). It catalyses the reaction vanillin + O2 + H2O = vanillate + H2O2 + H(+). The catalysed reaction is malonaldehyde + O2 + H2O = 3-oxopropanoate + H2O2 + H(+). The enzyme catalyses citral + O2 + H2O = 3,7-dimethylocta-2,6-dienoate + H2O2 + H(+). It carries out the reaction acrolein + O2 + H2O = acrylate + H2O2 + H(+). It catalyses the reaction (E)-4-hydroxynon-2-enal + O2 + H2O = (E)-4-hydroxynon-2-enoate + H2O2 + H(+). The catalysed reaction is (E)-cinnamaldehyde + O2 + H2O = (E)-cinnamate + H2O2 + H(+). The enzyme catalyses indole-3-carbaldehyde + O2 + H2O = indole-3-carboxylate + H2O2 + H(+). It carries out the reaction propanal + O2 + H2O = propanoate + H2O2 + H(+). It catalyses the reaction dodecanal + O2 + H2O = dodecanoate + H2O2 + H(+). The catalysed reaction is salicylaldehyde + O2 + H2O = salicylate + H2O2 + H(+). Inhibited by Cu(2+). Functionally, aldehyde oxidase with a broad substrate specificity. Involved in the accumulation of benzoic acid (BA) in siliques. Delays and protects siliques from senescence by catalyzing aldehyde detoxification in siliques. Catalyzes the oxidation of an array of aromatic and aliphatic aldehydes, including vanillin and the reactive carbonyl species (RCS) acrolein, 4-hydroxyl-2-nonenal (HNE), and malondialdehyde (MDA). In Arabidopsis thaliana (Mouse-ear cress), this protein is Aldehyde oxidase 4.